The sequence spans 78 residues: Antitoxin VapB1 (78 aa).

A SpoVT-AbrB domain is found at 3–44 (TKVFQSGNSQAVRIPMDFRFDVDTVEIFRKENGDVVLRPVSK).

This sequence belongs to the VapB family. As to quaternary structure, forms multimers, as well forming as a complex with VapC1.

Its function is as follows. Antitoxin component of a type II toxin-antitoxin (TA) system. Upon expression in E.coli neutralizes the effect of toxin VapC1. In vitro inhibits the RNase activity of VapC1. The polypeptide is Antitoxin VapB1 (vapB1) (Haemophilus influenzae (strain R2866)).